Here is a 771-residue protein sequence, read N- to C-terminus: Heat shock transcription factor (771 aa).

Residues 1–70 (MTTNLYAIAG…GIGISKPGLS (70 aa)) form a disordered region. Low complexity-rich tracts occupy residues 11–23 (PSKPTTPTSTPSP) and 31–42 (LKSLTSLPTNPL). The span at 43 to 62 (NPQGTSTSNALTNQSSSTGI) shows a compositional bias: polar residues. The DNA-binding element occupies 78-168 (MKVPAFLNKL…PIELWEFANP (91 aa)). The tract at residues 183–266 (RKNNRLSNSG…PPSHTSAGPL (84 aa)) is disordered. Low complexity-rich tracts occupy residues 189–199 (SNSGVGSSSSL) and 212–233 (SASAAAASGSGSGQIQQAISQG). The span at 238 to 262 (NHSTSGKYLITDGTTPGSAPPSHTS) shows a compositional bias: polar residues. The involved in trimerization stretch occupies residues 280–333 (GIAAIRQTQASIATDLRKLQASNEALWRQAYETQEKQRKHEETIDLIVSFLERL). Basic and acidic residues-rich tracts occupy residues 350–372 (RGVGVRRDRDGREGRDSRDARFA) and 399–415 (TGEHGEIESPSSDDRLV). Disordered regions lie at residues 350 to 513 (RGVG…SSNA), 590 to 634 (QALT…GSGT), and 708 to 771 (SGVG…SGLK). Over residues 418–448 (GSNSEYSIPSVKRTSSSSHPLSLGQLGSSRF) the composition is skewed to polar residues. Composition is skewed to low complexity over residues 497-511 (LSPLSDTDPLLPSSS) and 599-620 (HNPSLLNPNPNGNASTSASASA).

The protein belongs to the HSF family. In terms of assembly, homotrimer. Homotrimerization increases the affinity of HSF1 to DNA. Interacts with transcriptional coregulator SSA1 on chromatin. In terms of processing, phosphorylated at high temperature.

The protein localises to the nucleus. DNA-binding transcription factor that specifically binds heat shock promoter elements (HSE) and activates transcription. Promotes thermotolerance by transiently regulating a subset of genes. Induces expression of STI, SSA1, SSA2, HSP78 and KAR2 during the heat response. This chain is Heat shock transcription factor, found in Cryptococcus neoformans var. grubii serotype A (strain H99 / ATCC 208821 / CBS 10515 / FGSC 9487) (Filobasidiella neoformans var. grubii).